Here is a 338-residue protein sequence, read N- to C-terminus: Biotin synthase (338 aa).

The Radical SAM core domain maps to E59–R284. Positions 74, 78, and 81 each coordinate [4Fe-4S] cluster. The [2Fe-2S] cluster site is built by C117, C209, and R279.

The protein belongs to the radical SAM superfamily. Biotin synthase family. In terms of assembly, homodimer. Requires [4Fe-4S] cluster as cofactor. [2Fe-2S] cluster serves as cofactor.

It catalyses the reaction (4R,5S)-dethiobiotin + (sulfur carrier)-SH + 2 reduced [2Fe-2S]-[ferredoxin] + 2 S-adenosyl-L-methionine = (sulfur carrier)-H + biotin + 2 5'-deoxyadenosine + 2 L-methionine + 2 oxidized [2Fe-2S]-[ferredoxin]. The protein operates within cofactor biosynthesis; biotin biosynthesis; biotin from 7,8-diaminononanoate: step 2/2. In terms of biological role, catalyzes the conversion of dethiobiotin (DTB) to biotin by the insertion of a sulfur atom into dethiobiotin via a radical-based mechanism. The chain is Biotin synthase from Corynebacterium urealyticum (strain ATCC 43042 / DSM 7109).